Here is a 354-residue protein sequence, read N- to C-terminus: NADH-quinone oxidoreductase subunit H (354 aa).

10 helical membrane-spanning segments follow: residues 12–32 (LLGG…LIAP), 62–82 (PWGL…EIIL), 89–109 (GLFL…WVVV), 124–144 (LLFL…AGWA), 162–182 (VSYE…SGTL), 203–223 (FLSW…ISGL), 239–259 (EIVA…FFLA), 263–283 (NMIL…LPPI), 291–311 (IPGW…FLWV), and 326–346 (LGWK…GLWI).

The protein belongs to the complex I subunit 1 family. In terms of assembly, NDH-1 is composed of 14 different subunits. Subunits NuoA, H, J, K, L, M, N constitute the membrane sector of the complex.

The protein resides in the cell inner membrane. The enzyme catalyses a quinone + NADH + 5 H(+)(in) = a quinol + NAD(+) + 4 H(+)(out). NDH-1 shuttles electrons from NADH, via FMN and iron-sulfur (Fe-S) centers, to quinones in the respiratory chain. The immediate electron acceptor for the enzyme in this species is believed to be ubiquinone. Couples the redox reaction to proton translocation (for every two electrons transferred, four hydrogen ions are translocated across the cytoplasmic membrane), and thus conserves the redox energy in a proton gradient. This subunit may bind ubiquinone. This Methylibium petroleiphilum (strain ATCC BAA-1232 / LMG 22953 / PM1) protein is NADH-quinone oxidoreductase subunit H.